The sequence spans 124 residues: MAKPKGERKGKSAINEVVTREYTVNLHKRLHGVGFKKRAPRAIKEIRKFAEKQMGTPDVRVDTRLNKFLWSKGVRNVPFRVRVRLSRRRNDDEDSAHKLFTLVTYVPVASIKGLQTENVDASQE.

Belongs to the eukaryotic ribosomal protein eL31 family.

The sequence is that of Large ribosomal subunit protein eL31 (RpL31) from Spodoptera frugiperda (Fall armyworm).